The primary structure comprises 214 residues: LexA repressor (214 aa).

The H-T-H motif DNA-binding region spans 28–48 (IRDIQRELSISSTSVVAYNLR). Active-site for autocatalytic cleavage activity residues include Ser-133 and Lys-172.

Belongs to the peptidase S24 family. Homodimer.

The catalysed reaction is Hydrolysis of Ala-|-Gly bond in repressor LexA.. Its function is as follows. Represses a number of genes involved in the response to DNA damage (SOS response), including recA and lexA. In the presence of single-stranded DNA, RecA interacts with LexA causing an autocatalytic cleavage which disrupts the DNA-binding part of LexA, leading to derepression of the SOS regulon and eventually DNA repair. This is LexA repressor from Herpetosiphon aurantiacus (strain ATCC 23779 / DSM 785 / 114-95).